Reading from the N-terminus, the 158-residue chain is Transcriptional regulatory protein DoeX (158 aa).

An HTH asnC-type domain is found at 3–64 (LDRYDLKILE…RLNTDVLVKR (62 aa)). The H-T-H motif DNA-binding region spans 22–41 (KSKLAEAINLSVSPCWERVR).

It is found in the cytoplasm. Acts as a transcriptional regulator. It binds DNA specifically to a fragment from the doeA promoter region. In Halomonas elongata (strain ATCC 33173 / DSM 2581 / NBRC 15536 / NCIMB 2198 / 1H9), this protein is Transcriptional regulatory protein DoeX (doeX).